A 422-amino-acid chain; its full sequence is Regulator of sigma-W protease RasP (422 aa).

4 consecutive transmembrane segments (helical) span residues 6–26, 175–195, 346–366, and 394–414; these read VIAF…GHLL, IAAG…MLGL, IVNL…VNLL, and EAFV…VVTW. Residue His-20 participates in Zn(2+) binding. Residue Glu-21 is part of the active site. His-24 is a Zn(2+) binding site. In terms of domain architecture, PDZ spans 186–271; it reads AYVILVMLGL…TLHISVTPEA (86 aa).

The protein belongs to the peptidase M50B family. The cofactor is Zn(2+).

The protein localises to the cell membrane. Its function is as follows. Is responsible for site-2 cleavage of the RsiW anti-sigma factor. This results, after a third proteolytic step catalyzed by the ClpXP protease, in the release of SigW and the transcription activation of the genes under the control of the sigma-W factor. Can also cleave liberated signal peptides of PenP and Mpr, probably within in the cell membrane. The protein is Regulator of sigma-W protease RasP of Bacillus subtilis (strain 168).